The sequence spans 815 residues: Translation initiation factor IF-2 (815 aa).

Residues 153–176 (VQEKEAEKKVEKLKTADKPKEGNK) show a composition bias toward basic and acidic residues. Positions 153 to 219 (VQEKEAEKKV…THLSQKIQAE (67 aa)) are disordered. Over residues 191 to 209 (KQLHVARHNPNRRLKKKDR) the composition is skewed to basic residues. Residues 315 to 482 (ARPPIVTIMG…AISLTAEILE (168 aa)) form the tr-type G domain. Positions 324–331 (GHVDHGKT) are G1. Residue 324 to 331 (GHVDHGKT) participates in GTP binding. A G2 region spans residues 349–353 (GITQH). The interval 370-373 (DTPG) is G3. GTP-binding positions include 370–374 (DTPGH) and 424–427 (NKID). Positions 424–427 (NKID) are G4. The tract at residues 460-462 (SAH) is G5.

It belongs to the TRAFAC class translation factor GTPase superfamily. Classic translation factor GTPase family. IF-2 subfamily.

It is found in the cytoplasm. Functionally, one of the essential components for the initiation of protein synthesis. Protects formylmethionyl-tRNA from spontaneous hydrolysis and promotes its binding to the 30S ribosomal subunits. Also involved in the hydrolysis of GTP during the formation of the 70S ribosomal complex. This chain is Translation initiation factor IF-2, found in Vesicomyosocius okutanii subsp. Calyptogena okutanii (strain HA).